We begin with the raw amino-acid sequence, 467 residues long: Acid phosphatase PHO11 (467 aa).

Residues 1–17 (MLKSAVYSILAASLVNA) form the signal peptide. The active-site Nucleophile is His-75. N-linked (GlcNAc...) asparagine glycosylation is found at Asn-97, Asn-162, Asn-192, Asn-250, and Asn-315. Catalysis depends on Asp-338, which acts as the Proton donor. Residues Asn-356, Asn-390, Asn-439, Asn-445, and Asn-461 are each glycosylated (N-linked (GlcNAc...) asparagine).

The protein belongs to the histidine acid phosphatase family. Glycosylated during secretion across the membrane.

The enzyme catalyses a phosphate monoester + H2O = an alcohol + phosphate. In Saccharomyces cerevisiae (strain ATCC 204508 / S288c) (Baker's yeast), this protein is Acid phosphatase PHO11 (PHO11).